The primary structure comprises 486 residues: Malonate-semialdehyde dehydrogenase 2 (486 aa).

NAD(+)-binding residues include Phe154, Lys178, Glu181, Arg182, and Ser231. The active-site Nucleophile is the Cys286. Residue Glu386 participates in NAD(+) binding.

Belongs to the aldehyde dehydrogenase family. IolA subfamily. As to quaternary structure, homotetramer.

The catalysed reaction is 3-oxopropanoate + NAD(+) + CoA + H2O = hydrogencarbonate + acetyl-CoA + NADH + H(+). It catalyses the reaction 2-methyl-3-oxopropanoate + NAD(+) + CoA + H2O = propanoyl-CoA + hydrogencarbonate + NADH + H(+). The protein operates within polyol metabolism; myo-inositol degradation into acetyl-CoA; acetyl-CoA from myo-inositol: step 7/7. Catalyzes the oxidation of malonate semialdehyde (MSA) and methylmalonate semialdehyde (MMSA) into acetyl-CoA and propanoyl-CoA, respectively. Is involved in a myo-inositol catabolic pathway. Bicarbonate, and not CO2, is the end-product of the enzymatic reaction. The polypeptide is Malonate-semialdehyde dehydrogenase 2 (Oceanobacillus iheyensis (strain DSM 14371 / CIP 107618 / JCM 11309 / KCTC 3954 / HTE831)).